The chain runs to 2050 residues: Unconventional myosin-XVIIIa (2050 aa).

2 stretches are compositionally biased toward basic and acidic residues: residues 1-17 (MFNL…GRKE) and 23-34 (EKKERMSAAELR). Residues 1-34 (MFNLMKKDKDKDGGRKEKKEKKEKKERMSAAELR) form a disordered region. Residues 1-398 (MFNLMKKDKD…LDVDEDDIEK (398 aa)) form a mediates nucleotide-independent binding to F-actin and interaction with GOLPH3 region. Phosphoserine occurs at positions 35, 52, 72, and 74. A Phosphothreonine modification is found at threonine 79. Residues serine 83 and serine 98 each carry the phosphoserine modification. Phosphothreonine is present on threonine 99. Phosphoserine is present on residues serine 102 and serine 103. An Interaction with actin motif is present at residues 114–118 (RGSVL). Serine 140, serine 145, serine 157, serine 160, serine 164, serine 234, and isoleucine 340 each carry phosphoserine. Residues 140–167 (SFSQRSRDESASETSTPSEHSAAPSPQV) are disordered. Positions 220–311 (ELELQRRPTG…SVRLKVQPIP (92 aa)) constitute a PDZ domain. In terms of domain architecture, Myosin N-terminal SH3-like spans 349-401 (TEKVWLVHRDGFSLASQLKSEELSLPEGKARVKLDHDGAILDVDEDDIEKANA). In terms of domain architecture, Myosin motor spans 405-1181 (DRLEDLASLV…TLARLEEQRD (777 aa)). Position 498-505 (498-505 (GSSGSGKT)) interacts with ATP. Residues serine 983, serine 1063, serine 1064, and serine 1066 each carry the phosphoserine modification. The disordered stretch occupies residues 1051 to 1071 (PGEPRSASSRRVSSSSELDLP). Residues 1055 to 1066 (RSASSRRVSSSS) show a composition bias toward low complexity. The region spanning 1184-1213 (TSRHLTLFQAACRGYLARQHFKKRKIQDLA) is the IQ domain. Positions 1242-1967 (LIQVQLSEEQ…KKNKLEGDSD (726 aa)) form a coiled coil. Positions 1448–1477 (RNHELEKKQRRFDSELSQAHEETQREKLQR) are disordered. A Phosphoserine modification is found at serine 1636. The disordered stretch occupies residues 1848–1897 (MEKLTEERDQRAAAENREKEQNKRLQRQLRDTKEEMSELARKEAEASRKK). Residues serine 1938, serine 1966, serine 1970, serine 1994, serine 1998, serine 2002, serine 2003, serine 2016, serine 2032, serine 2037, and serine 2039 each carry the phosphoserine modification. Residues 1955–2050 (YQKKKNKLEG…TEAKLTETSA (96 aa)) are disordered. Threonine 2041 is modified (phosphothreonine). Residues 2041–2050 (TEAKLTETSA) are compositionally biased toward basic and acidic residues.

It belongs to the TRAFAC class myosin-kinesin ATPase superfamily. Myosin family. As to quaternary structure, homodimer. Forms a tripartite complex with CDC42BPA/CDC42BPB and LURAP1 with the latter acting as an adapter connecting CDC42BPA/CDC42BPB and MYO18A. Binds F-actin; regulated by ADP and GOLPH3. Interacts with GOLPH3; the interaction is direct and may link Golgi membranes to the actin cytoskeleton. Interacts with JAK3. Interacts with MSR1 and CD14. Post-translationally, phosphorylated on tyrosine upon CSF1R activation. Isoform 6 is phosphorylated on Ser-340. As to expression, isoform 1; Expressed ubiquitously. Isoform 2: Specifically expressed in most hematopoietic cells. Isoform 3: Predominantly expressed in alveolar macrophages.

It localises to the golgi apparatus. Its subcellular location is the trans-Golgi network. The protein resides in the golgi outpost. The protein localises to the cytoplasm. It is found in the cytoskeleton. It localises to the microtubule organizing center. Its subcellular location is the endoplasmic reticulum-Golgi intermediate compartment. Functionally, may link Golgi membranes to the cytoskeleton and participate in the tensile force required for vesicle budding from the Golgi. Thereby, may play a role in Golgi membrane trafficking and could indirectly give its flattened shape to the Golgi apparatus. Alternatively, in concert with LURAP1 and CDC42BPA/CDC42BPB, has been involved in modulating lamellar actomyosin retrograde flow that is crucial to cell protrusion and migration. May be involved in the maintenance of the stromal cell architectures required for cell to cell contact. Regulates trafficking, expression, and activation of innate immune receptors on macrophages. Plays a role to suppress inflammatory responsiveness of macrophages via a mechanism that modulates CD14 trafficking. Acts as a receptor of surfactant-associated protein A (SFTPA1/SP-A) and plays an important role in internalization and clearance of SFTPA1-opsonized S.aureus by alveolar macrophages. Strongly enhances natural killer cell cytotoxicity. This Mus musculus (Mouse) protein is Unconventional myosin-XVIIIa (Myo18a).